We begin with the raw amino-acid sequence, 225 residues long: Endonuclease V (225 aa).

The Mg(2+) site is built by Asp43 and Asp110.

This sequence belongs to the endonuclease V family. It depends on Mg(2+) as a cofactor.

It is found in the cytoplasm. It carries out the reaction Endonucleolytic cleavage at apurinic or apyrimidinic sites to products with a 5'-phosphate.. DNA repair enzyme involved in the repair of deaminated bases. Selectively cleaves double-stranded DNA at the second phosphodiester bond 3' to a deoxyinosine leaving behind the intact lesion on the nicked DNA. In Thermotoga neapolitana (strain ATCC 49049 / DSM 4359 / NBRC 107923 / NS-E), this protein is Endonuclease V.